The sequence spans 157 residues: F-box protein SNE (157 aa).

The region spanning 24-70 (PVFSINDHHDVLVEILRRLDGSSLCSAACVCRLWSAVARNDSIWEEL) is the F-box domain.

Part of a SCF (ASK-cullin-F-box) protein ligase complex. Interacts directly with SKP1A and SKP1B. Highly expressed in flowers and at much lower level in seedlings, rosette leaves and green siliques.

It is found in the nucleus. Its pathway is protein modification; protein ubiquitination. In terms of biological role, essential component of a SCF-type E3 ligase complex that positively regulates the gibberellin signaling pathway. Upon gibberellin treatment, such complex probably mediates the ubiquitination and subsequent degradation of DELLA proteins (GAI, RGA and RGL2), some repressors of the gibberellin pathway, leading to activate the pathway. Can partially complement the absence of GID2/SLY1. This is F-box protein SNE (SNE) from Arabidopsis thaliana (Mouse-ear cress).